A 162-amino-acid polypeptide reads, in one-letter code: Caveolin-2 (162 aa).

Residues 1 to 86 (MGLETEKADV…FEISKYVMYK (86 aa)) are Cytoplasmic-facing. A Phosphotyrosine; by SRC modification is found at Tyr19. 2 positions are modified to phosphoserine: Ser20 and Ser23. At Tyr27 the chain carries Phosphotyrosine; by SRC. A Phosphoserine modification is found at Ser36. Positions 87–107 (FLTVFLAIPLAFIAGILFATL) form an intramembrane region, helical. The Cytoplasmic segment spans residues 108–162 (SCLHIWILMPFVKTCLMVLPSVQTIWKSVTDVIIAPLCTSVGRCFSSVSLQLSQD).

Belongs to the caveolin family. In terms of assembly, monomer or homodimer. Interacts with CAV1; the interaction forms a stable heterooligomeric complex that is required for targeting to lipid rafts and for caveolae formation. Tyrosine phosphorylated forms do not form heterooligomers with the Tyr-19-phosphorylated form existing as a monomer or dimer, and the Tyr-27-form as a monomer only. Interacts (tyrosine phosphorylated form) with the SH2 domain-containing proteins, RASA1, NCK1 and SRC. Interacts (tyrosine phosphorylated form) with INSR, the interaction (Tyr-27-phosphorylated form) is increased on insulin stimulation. Interacts (Tyr-19 phosphorylated form) with MAPK1 (phosphorylated form); the interaction, promoted by insulin, leads to nuclear location and MAPK1 activation. Interacts with STAT3; the interaction is increased on insulin-induced tyrosine phosphorylation leading to STAT activation. Post-translationally, phosphorylated on serine and tyrosine residues. CAV1 promotes phosphorylation on Ser-23 which then targets the complex to the plasma membrane, lipid rafts and caveolae. Phosphorylation on Ser-36 appears to modulate mitosis in endothelial cells. Phosphorylation on both Tyr-19 and Tyr-27 is required for insulin-induced 'Ser-727' phosphorylation of STAT3 and its activation. Phosphorylation on Tyr-19 is required for insulin-induced phosphorylation of MAPK1 and DNA binding of STAT3. Tyrosine phosphorylation is induced by both EGF and insulin (By. similarity).

The protein localises to the nucleus. It localises to the cytoplasm. The protein resides in the golgi apparatus membrane. Its subcellular location is the cell membrane. It is found in the membrane. The protein localises to the caveola. May act as a scaffolding protein within caveolar membranes. Interacts directly with G-protein alpha subunits and can functionally regulate their activity. Acts as an accessory protein in conjunction with CAV1 in targeting to lipid rafts and driving caveolae formation. The Ser-36 phosphorylated form has a role in modulating mitosis in endothelial cells. Positive regulator of cellular mitogenesis of the MAPK signaling pathway. Required for the insulin-stimulated nuclear translocation and activation of MAPK1 and STAT3, and the subsequent regulation of cell cycle progression. In Gorilla gorilla gorilla (Western lowland gorilla), this protein is Caveolin-2 (CAV2).